An 829-amino-acid chain; its full sequence is Protein SEY1 homolog 2 (829 aa).

The tract at residues 1–21 (MDEVSPTKHFTSKPLLPTKTP) is disordered. The Cytoplasmic segment spans residues 1-728 (MDEVSPTKHF…EKENSEIKYQ (728 aa)). Positions 83–305 (GMDYNAVGIL…FLPQYNKEIP (223 aa)) constitute a GB1/RHD3-type G domain. 93–100 (GAQSSGKS) serves as a coordination point for GTP. 2 coiled-coil regions span residues 372 to 396 (KKIM…YMES) and 576 to 596 (DTIE…IKEL). Residues 729–749 (IPLYLIVLVIFFGFDEFIAIL) form a helical membrane-spanning segment. At 750 to 752 (TNP) the chain is on the lumenal side. The chain crosses the membrane as a helical span at residues 753–773 (LLFILTLIIGGGIYIGYKLNL). Topologically, residues 774–829 (GGVAKNYIQYLLSMSLSSTMEYLRTIPFFTPLIDKIWPKDDNKDDDSTEETQEETK) are cytoplasmic.

Belongs to the TRAFAC class dynamin-like GTPase superfamily. GB1/RHD3 GTPase family. RHD3 subfamily.

Its subcellular location is the endoplasmic reticulum membrane. Functionally, probable GTP-binding protein that may be involved in cell development. The polypeptide is Protein SEY1 homolog 2 (Entamoeba dispar (strain ATCC PRA-260 / SAW760)).